A 322-amino-acid polypeptide reads, in one-letter code: Malate dehydrogenase (322 aa).

NAD(+)-binding positions include 10 to 15 (GSGQIG) and Asp-34. 2 residues coordinate substrate: Arg-83 and Arg-89. NAD(+)-binding positions include Asn-96 and 119–121 (ITN). Residues Asn-121 and Arg-152 each contribute to the substrate site. His-176 functions as the Proton acceptor in the catalytic mechanism.

The protein belongs to the LDH/MDH superfamily. MDH type 3 family.

It catalyses the reaction (S)-malate + NAD(+) = oxaloacetate + NADH + H(+). In terms of biological role, catalyzes the reversible oxidation of malate to oxaloacetate. This is Malate dehydrogenase from Bradyrhizobium sp. (strain BTAi1 / ATCC BAA-1182).